The chain runs to 416 residues: Serine hydroxymethyltransferase (416 aa).

(6S)-5,6,7,8-tetrahydrofolate is bound by residues Leu118 and 122–124 (GHL). An N6-(pyridoxal phosphate)lysine modification is found at Lys227. (6S)-5,6,7,8-tetrahydrofolate contacts are provided by residues Glu242 and 350–352 (SPF).

It belongs to the SHMT family. As to quaternary structure, homodimer. Requires pyridoxal 5'-phosphate as cofactor.

Its subcellular location is the cytoplasm. It catalyses the reaction (6R)-5,10-methylene-5,6,7,8-tetrahydrofolate + glycine + H2O = (6S)-5,6,7,8-tetrahydrofolate + L-serine. It functions in the pathway one-carbon metabolism; tetrahydrofolate interconversion. It participates in amino-acid biosynthesis; glycine biosynthesis; glycine from L-serine: step 1/1. Catalyzes the reversible interconversion of serine and glycine with tetrahydrofolate (THF) serving as the one-carbon carrier. This reaction serves as the major source of one-carbon groups required for the biosynthesis of purines, thymidylate, methionine, and other important biomolecules. Also exhibits THF-independent aldolase activity toward beta-hydroxyamino acids, producing glycine and aldehydes, via a retro-aldol mechanism. The chain is Serine hydroxymethyltransferase from Syntrophotalea carbinolica (strain DSM 2380 / NBRC 103641 / GraBd1) (Pelobacter carbinolicus).